A 442-amino-acid chain; its full sequence is tRNA modification GTPase MnmE (442 aa).

3 residues coordinate (6S)-5-formyl-5,6,7,8-tetrahydrofolate: R27, E84, and K124. The TrmE-type G domain occupies 221-366 (GLHVVIVGAP…LLDALQAFAE (146 aa)). GTP-binding positions include 231-236 (NAGKSS), 250-256 (SEEAGTT), and 275-278 (DTAG). Mg(2+) contacts are provided by S235 and T256. K442 is a (6S)-5-formyl-5,6,7,8-tetrahydrofolate binding site.

Belongs to the TRAFAC class TrmE-Era-EngA-EngB-Septin-like GTPase superfamily. TrmE GTPase family. As to quaternary structure, homodimer. Heterotetramer of two MnmE and two MnmG subunits. The cofactor is K(+).

It localises to the cytoplasm. Its function is as follows. Exhibits a very high intrinsic GTPase hydrolysis rate. Involved in the addition of a carboxymethylaminomethyl (cmnm) group at the wobble position (U34) of certain tRNAs, forming tRNA-cmnm(5)s(2)U34. This is tRNA modification GTPase MnmE from Brucella melitensis biotype 1 (strain ATCC 23456 / CCUG 17765 / NCTC 10094 / 16M).